The chain runs to 223 residues: uncharacterized protein (223 aa).

Residues 5–116 (RILIVEDDVM…ELLLRMRNML (112 aa)) enclose the Response regulatory domain. D52 bears the 4-aspartylphosphate mark. Positions 121 to 219 (GTFTQIKHLY…IYGEGYRLNT (99 aa)) form a DNA-binding region, ompR/PhoB-type.

Phosphorylated by YbdK.

The protein localises to the cytoplasm. Functionally, member of the two-component regulatory system YbdK/YbdJ. This is an uncharacterized protein from Bacillus subtilis (strain 168).